The chain runs to 370 residues: Coiled-coil domain-containing protein 89 (370 aa).

The tract at residues 1 to 38 (MPQEESAPRMDTPSSEEPLDKQNRKLEDQEEEMGFKEL) is disordered. At Thr-12 the chain carries Phosphothreonine. Basic and acidic residues predominate over residues 18 to 38 (PLDKQNRKLEDQEEEMGFKEL). Residues 19–346 (LDKQNRKLED…YDELRLQSEA (328 aa)) are a coiled coil.

It belongs to the CCDC89 family. As to quaternary structure, interacts with HEY1.

The protein localises to the cytoplasm. It is found in the nucleus. The polypeptide is Coiled-coil domain-containing protein 89 (Bos taurus (Bovine)).